A 311-amino-acid polypeptide reads, in one-letter code: tRNA-cytidine(32) 2-sulfurtransferase (311 aa).

The short motif at 45 to 50 (SGGKDS) is the PP-loop motif element. The [4Fe-4S] cluster site is built by C120, C123, and C211.

This sequence belongs to the TtcA family. In terms of assembly, homodimer. Mg(2+) is required as a cofactor. [4Fe-4S] cluster serves as cofactor.

The protein resides in the cytoplasm. It carries out the reaction cytidine(32) in tRNA + S-sulfanyl-L-cysteinyl-[cysteine desulfurase] + AH2 + ATP = 2-thiocytidine(32) in tRNA + L-cysteinyl-[cysteine desulfurase] + A + AMP + diphosphate + H(+). It participates in tRNA modification. Functionally, catalyzes the ATP-dependent 2-thiolation of cytidine in position 32 of tRNA, to form 2-thiocytidine (s(2)C32). The sulfur atoms are provided by the cysteine/cysteine desulfurase (IscS) system. This is tRNA-cytidine(32) 2-sulfurtransferase from Shewanella halifaxensis (strain HAW-EB4).